The primary structure comprises 333 residues: Ferrochelatase (333 aa).

Fe cation is bound by residues H202 and E284.

It belongs to the ferrochelatase family.

It is found in the cytoplasm. It catalyses the reaction heme b + 2 H(+) = protoporphyrin IX + Fe(2+). The protein operates within porphyrin-containing compound metabolism; protoheme biosynthesis; protoheme from protoporphyrin-IX: step 1/1. Catalyzes the ferrous insertion into protoporphyrin IX. This Francisella tularensis subsp. mediasiatica (strain FSC147) protein is Ferrochelatase.